Consider the following 123-residue polypeptide: Anti-lipopolysaccharide factor (123 aa).

A signal peptide spans 1-26 (MRTRVMAGLCVALVVMCLYMPQPCEA). Cysteine 55 and cysteine 76 are oxidised to a cystine.

Strong expression in hemocytes, heart and muscle, with weaker expression detected in gills and hepatopancreas. No expression detected in eyes.

The protein resides in the secreted. In terms of biological role, binds to bacterial LPS and may specifically inhibit the LPS-mediated activation of the hemolymph coagulation. It has a strong antibacterial effect especially on the growth of Gram-negative bacteria. In Scylla serrata (Mud crab), this protein is Anti-lipopolysaccharide factor.